The sequence spans 116 residues: Large ribosomal subunit protein uL18 (116 aa).

It belongs to the universal ribosomal protein uL18 family. Part of the 50S ribosomal subunit; part of the 5S rRNA/L5/L18/L25 subcomplex. Contacts the 5S and 23S rRNAs.

Its function is as follows. This is one of the proteins that bind and probably mediate the attachment of the 5S RNA into the large ribosomal subunit, where it forms part of the central protuberance. This is Large ribosomal subunit protein uL18 from Pseudomonas putida (strain W619).